The following is an 800-amino-acid chain: Signaling protein YkoW (800 aa).

Transmembrane regions (helical) follow at residues 5–27, 44–66, 76–98, 103–125, 135–157, 178–200, and 215–237; these read VTYN…YISL, WLIG…GMMA, EFMP…LYFV, LTYY…MHYI, IIYE…FVSL, VSSI…AATF, and TFHW…LFSS. The 195-residue stretch at 7-201 folds into the MHYT domain; sequence YNTTLICLSI…YTGMLAATFH (195 aa). Residues 255–319 enclose the PAS domain; the sequence is QRFQSLIVHN…FEQVKKDKQA (65 aa). A GGDEF domain is found at 402–536; it reads YNTVVFFLDL…NKSKYRYYSF (135 aa). An EAL domain is found at 545 to 798; it reads KLNQEMVLRE…QFEQFIIEQP (254 aa).

Its subcellular location is the cell membrane. Its function is as follows. Probable signaling protein whose physiological role is not yet known. The protein is Signaling protein YkoW (ykoW) of Bacillus subtilis (strain 168).